Here is a 534-residue protein sequence, read N- to C-terminus: CTP synthase (534 aa).

Residues 1-269 form an amidoligase domain region; that stretch reads MHVSNSKFIF…DKIIIDAFRL (269 aa). Residue serine 17 coordinates CTP. Position 17 (serine 17) interacts with UTP. An ATP-binding site is contributed by 18 to 23; the sequence is SLGKGV. Residue tyrosine 58 participates in L-glutamine binding. Aspartate 75 lines the ATP pocket. The Mg(2+) site is built by aspartate 75 and glutamate 143. Residues 150–152, 190–195, and lysine 226 contribute to the CTP site; these read DIE and KTKPTQ. Residues 190 to 195 and lysine 226 each bind UTP; that span reads KTKPTQ. In terms of domain architecture, Glutamine amidotransferase type-1 spans 294–532; the sequence is DIAIVGKYIK…IENAYIYKKE (239 aa). Glycine 352 is an L-glutamine binding site. Cysteine 379 serves as the catalytic Nucleophile; for glutamine hydrolysis. L-glutamine is bound by residues 380–383, glutamate 403, and arginine 460; that span reads LGMQ. Catalysis depends on residues histidine 505 and glutamate 507.

This sequence belongs to the CTP synthase family. As to quaternary structure, homotetramer.

The enzyme catalyses UTP + L-glutamine + ATP + H2O = CTP + L-glutamate + ADP + phosphate + 2 H(+). It catalyses the reaction L-glutamine + H2O = L-glutamate + NH4(+). It carries out the reaction UTP + NH4(+) + ATP = CTP + ADP + phosphate + 2 H(+). It functions in the pathway pyrimidine metabolism; CTP biosynthesis via de novo pathway; CTP from UDP: step 2/2. Its activity is regulated as follows. Allosterically activated by GTP, when glutamine is the substrate; GTP has no effect on the reaction when ammonia is the substrate. The allosteric effector GTP functions by stabilizing the protein conformation that binds the tetrahedral intermediate(s) formed during glutamine hydrolysis. Inhibited by the product CTP, via allosteric rather than competitive inhibition. In terms of biological role, catalyzes the ATP-dependent amination of UTP to CTP with either L-glutamine or ammonia as the source of nitrogen. Regulates intracellular CTP levels through interactions with the four ribonucleotide triphosphates. In Hydrogenobaculum sp. (strain Y04AAS1), this protein is CTP synthase.